The following is a 473-amino-acid chain: Aspartyl/glutamyl-tRNA(Asn/Gln) amidotransferase subunit B (473 aa).

The protein belongs to the GatB/GatE family. GatB subfamily. As to quaternary structure, heterotrimer of A, B and C subunits.

The catalysed reaction is L-glutamyl-tRNA(Gln) + L-glutamine + ATP + H2O = L-glutaminyl-tRNA(Gln) + L-glutamate + ADP + phosphate + H(+). It carries out the reaction L-aspartyl-tRNA(Asn) + L-glutamine + ATP + H2O = L-asparaginyl-tRNA(Asn) + L-glutamate + ADP + phosphate + 2 H(+). Its function is as follows. Allows the formation of correctly charged Asn-tRNA(Asn) or Gln-tRNA(Gln) through the transamidation of misacylated Asp-tRNA(Asn) or Glu-tRNA(Gln) in organisms which lack either or both of asparaginyl-tRNA or glutaminyl-tRNA synthetases. The reaction takes place in the presence of glutamine and ATP through an activated phospho-Asp-tRNA(Asn) or phospho-Glu-tRNA(Gln). The polypeptide is Aspartyl/glutamyl-tRNA(Asn/Gln) amidotransferase subunit B (Francisella tularensis subsp. tularensis (strain FSC 198)).